We begin with the raw amino-acid sequence, 344 residues long: 2,3,4,5-tetrahydropyridine-2,6-dicarboxylate N-succinyltransferase (344 aa).

Glutamate 205 contacts Mg(2+). Glutamate 221 serves as the catalytic Acyl-anhydride intermediate. Succinyl-CoA-binding positions include arginine 223, glycine 238, serine 241, alanine 264, 279-280, glycine 287, lysine 304, and 317-320; these read EA and RRNS.

The protein belongs to the type 2 tetrahydrodipicolinate N-succinyltransferase family. As to quaternary structure, homotrimer.

The protein localises to the cytoplasm. The catalysed reaction is (S)-2,3,4,5-tetrahydrodipicolinate + succinyl-CoA + H2O = (S)-2-succinylamino-6-oxoheptanedioate + CoA. It participates in amino-acid biosynthesis; L-lysine biosynthesis via DAP pathway; LL-2,6-diaminopimelate from (S)-tetrahydrodipicolinate (succinylase route): step 1/3. In terms of biological role, catalyzes the conversion of the cyclic tetrahydrodipicolinate (THDP) into the acyclic N-succinyl-L-2-amino-6-oxopimelate using succinyl-CoA. The chain is 2,3,4,5-tetrahydropyridine-2,6-dicarboxylate N-succinyltransferase from Pseudomonas putida (strain ATCC 47054 / DSM 6125 / CFBP 8728 / NCIMB 11950 / KT2440).